The chain runs to 238 residues: Ubiquinone biosynthesis O-methyltransferase (238 aa).

S-adenosyl-L-methionine contacts are provided by Arg-40, Gly-59, Asp-80, and Met-124.

Belongs to the methyltransferase superfamily. UbiG/COQ3 family.

The enzyme catalyses a 3-demethylubiquinol + S-adenosyl-L-methionine = a ubiquinol + S-adenosyl-L-homocysteine + H(+). It carries out the reaction a 3-(all-trans-polyprenyl)benzene-1,2-diol + S-adenosyl-L-methionine = a 2-methoxy-6-(all-trans-polyprenyl)phenol + S-adenosyl-L-homocysteine + H(+). Its pathway is cofactor biosynthesis; ubiquinone biosynthesis. In terms of biological role, O-methyltransferase that catalyzes the 2 O-methylation steps in the ubiquinone biosynthetic pathway. The chain is Ubiquinone biosynthesis O-methyltransferase from Ralstonia nicotianae (strain ATCC BAA-1114 / GMI1000) (Ralstonia solanacearum).